Reading from the N-terminus, the 175-residue chain is NADH-ubiquinone oxidoreductase chain 6 (175 aa).

5 helical membrane-spanning segments follow: residues Met-1–Ser-21, Ser-25–Leu-45, Phe-47–Val-67, Val-88–Leu-108, and Tyr-149–Met-169.

Belongs to the complex I subunit 6 family. Core subunit of respiratory chain NADH dehydrogenase (Complex I) which is composed of 45 different subunits.

Its subcellular location is the mitochondrion inner membrane. It catalyses the reaction a ubiquinone + NADH + 5 H(+)(in) = a ubiquinol + NAD(+) + 4 H(+)(out). Its function is as follows. Core subunit of the mitochondrial membrane respiratory chain NADH dehydrogenase (Complex I) which catalyzes electron transfer from NADH through the respiratory chain, using ubiquinone as an electron acceptor. Essential for the catalytic activity and assembly of complex I. In Ovis aries (Sheep), this protein is NADH-ubiquinone oxidoreductase chain 6 (MT-ND6).